A 650-amino-acid chain; its full sequence is FAS-associated factor 1 (650 aa).

A UBA domain is found at 1-57 (MASNMDREMILADFQACTGIENIDEAITLLEQNNWDLVAAINGVIPQENGILQSEYG). The disordered stretch occupies residues 62 to 87 (PGPAFNPASHPASAPTSSSSSAFRPV). Residues 68–83 (PASHPASAPTSSSSSA) show a composition bias toward low complexity. Serine 320 carries the phosphoserine modification. The UBX domain maps to 569-646 (NAEPVSKLRI…KLFPQETLFL (78 aa)). Threonine 580 is modified (phosphothreonine). Serine 582 carries the post-translational modification Phosphoserine.

In terms of assembly, interacts with CDT1 and ATPase VCP/p97. Interacts (via UBA domain) with FAS (via death domain). Interacts (via UBA domain) with NLRP12 (via DAPIN/PYRIN domain). As to expression, most abundant in testis, slightly less abundant in skeletal muscle and heart, followed by prostate, thymus, ovary, small intestine, and colon. Not detected in the peripheral blood leukocytes.

The protein localises to the nucleus. Functionally, ubiquitin-binding protein. Required for the progression of DNA replication forks by targeting DNA replication licensing factor CDT1 for degradation. Potentiates but cannot initiate FAS-induced apoptosis. The chain is FAS-associated factor 1 (FAF1) from Homo sapiens (Human).